The chain runs to 461 residues: D-phenylhydantoinase (461 aa).

3 residues coordinate a divalent metal cation: histidine 59, histidine 61, and lysine 151. Residue lysine 151 is modified to N6-carboxylysine. Substrate is bound at residue tyrosine 156. Positions 182 and 239 each coordinate a divalent metal cation. Residue serine 286 coordinates substrate. Aspartate 313 is an a divalent metal cation binding site. Asparagine 335 is a substrate binding site.

This sequence belongs to the metallo-dependent hydrolases superfamily. Hydantoinase/dihydropyrimidinase family. As to quaternary structure, homotetramer. Requires Zn(2+) as cofactor. Ni(2+) serves as cofactor. Co(2+) is required as a cofactor. The cofactor is Mn(2+). In terms of processing, carboxylation allows a single lysine to coordinate two divalent metal cations.

It catalyses the reaction D-5-phenylhydantoin + H2O = N-carbamoyl-D-phenylglycine + H(+). Its function is as follows. Catalyzes the stereospecific hydrolysis of the cyclic amide bond of D-hydantoin derivatives with an aromatic side chains at the 5'-position. Has no activity on dihydropyrimidines. The physiological function is unknown. The polypeptide is D-phenylhydantoinase (hyuA) (Escherichia coli (strain K12)).